Here is a 402-residue protein sequence, read N- to C-terminus: Putative FBD-associated F-box protein At5g56690 (402 aa).

Residues 1 to 47 (MAEISGLPDDLLVKILAFLPTKVAISTSVLSKQWRFLWMWLPKLKYD) enclose the F-box domain. In terms of domain architecture, FBD spans 349 to 401 (SWSKNQGSVPKCFLNSLETFRVKWYYSEEQEDRDFLSLIFKHARCLKSTSILH).

This is Putative FBD-associated F-box protein At5g56690 from Arabidopsis thaliana (Mouse-ear cress).